A 328-amino-acid polypeptide reads, in one-letter code: tRNA uridine(34) hydroxylase (328 aa).

Residues 130 to 224 (LDKDTVVLDT…YGKDPEVQGE (95 aa)) form the Rhodanese domain. Residue C184 is the Cysteine persulfide intermediate of the active site.

Belongs to the TrhO family.

It catalyses the reaction uridine(34) in tRNA + AH2 + O2 = 5-hydroxyuridine(34) in tRNA + A + H2O. Functionally, catalyzes oxygen-dependent 5-hydroxyuridine (ho5U) modification at position 34 in tRNAs. The sequence is that of tRNA uridine(34) hydroxylase from Streptococcus pneumoniae serotype 19F (strain G54).